The following is a 128-amino-acid chain: Small ribosomal subunit protein uS10 (128 aa).

It belongs to the universal ribosomal protein uS10 family.

The chain is Small ribosomal subunit protein uS10 (RPS20) from Oryza sativa subsp. japonica (Rice).